The following is a 245-amino-acid chain: 1-(5-phosphoribosyl)-5-[(5-phosphoribosylamino)methylideneamino] imidazole-4-carboxamide isomerase (245 aa).

The active-site Proton acceptor is the Asp7. Residue Asp129 is the Proton donor of the active site.

The protein belongs to the HisA/HisF family.

It is found in the cytoplasm. It carries out the reaction 1-(5-phospho-beta-D-ribosyl)-5-[(5-phospho-beta-D-ribosylamino)methylideneamino]imidazole-4-carboxamide = 5-[(5-phospho-1-deoxy-D-ribulos-1-ylimino)methylamino]-1-(5-phospho-beta-D-ribosyl)imidazole-4-carboxamide. Its pathway is amino-acid biosynthesis; L-histidine biosynthesis; L-histidine from 5-phospho-alpha-D-ribose 1-diphosphate: step 4/9. The protein is 1-(5-phosphoribosyl)-5-[(5-phosphoribosylamino)methylideneamino] imidazole-4-carboxamide isomerase of Edwardsiella ictaluri (strain 93-146).